Reading from the N-terminus, the 263-residue chain is 3-methyl-2-oxobutanoate hydroxymethyltransferase (263 aa).

Mg(2+) is bound by residues D43 and D82. 3-methyl-2-oxobutanoate-binding positions include 43–44, D82, and K111; that span reads DS. Residue E113 coordinates Mg(2+). E179 serves as the catalytic Proton acceptor.

Belongs to the PanB family. As to quaternary structure, homodecamer; pentamer of dimers. Requires Mg(2+) as cofactor.

The protein localises to the cytoplasm. It carries out the reaction 3-methyl-2-oxobutanoate + (6R)-5,10-methylene-5,6,7,8-tetrahydrofolate + H2O = 2-dehydropantoate + (6S)-5,6,7,8-tetrahydrofolate. It participates in cofactor biosynthesis; (R)-pantothenate biosynthesis; (R)-pantoate from 3-methyl-2-oxobutanoate: step 1/2. Functionally, catalyzes the reversible reaction in which hydroxymethyl group from 5,10-methylenetetrahydrofolate is transferred onto alpha-ketoisovalerate to form ketopantoate. The protein is 3-methyl-2-oxobutanoate hydroxymethyltransferase of Neisseria gonorrhoeae (strain ATCC 700825 / FA 1090).